A 442-amino-acid chain; its full sequence is Chromosomal replication initiator protein DnaA (442 aa).

A domain I, interacts with DnaA modulators region spans residues 1–75; that stretch reads MDAWPRCLER…GNGEVALAVG (75 aa). Residues 75–104 form a domain II region; sequence GSRPRAPEPAPAPVAATIAPQAAPIAPFAG. The interval 105–322 is domain III, AAA+ region; that stretch reads NLDSHYTFAN…GALNTLVARA (218 aa). Gly150, Gly152, Lys153, and Thr154 together coordinate ATP. The interval 323–442 is domain IV, binds dsDNA; that stretch reads NFTGRSITVE…WEKLIRKLSE (120 aa).

It belongs to the DnaA family. As to quaternary structure, oligomerizes as a right-handed, spiral filament on DNA at oriC.

The protein localises to the cytoplasm. In terms of biological role, plays an essential role in the initiation and regulation of chromosomal replication. ATP-DnaA binds to the origin of replication (oriC) to initiate formation of the DNA replication initiation complex once per cell cycle. Binds the DnaA box (a 9 base pair repeat at the origin) and separates the double-stranded (ds)DNA. Forms a right-handed helical filament on oriC DNA; dsDNA binds to the exterior of the filament while single-stranded (ss)DNA is stabiized in the filament's interior. The ATP-DnaA-oriC complex binds and stabilizes one strand of the AT-rich DNA unwinding element (DUE), permitting loading of DNA polymerase. After initiation quickly degrades to an ADP-DnaA complex that is not apt for DNA replication. Binds acidic phospholipids. The sequence is that of Chromosomal replication initiator protein DnaA from Xanthomonas oryzae pv. oryzae (strain PXO99A).